Consider the following 130-residue polypeptide: Large ribosomal subunit protein uL14 (130 aa).

It belongs to the universal ribosomal protein uL14 family. In terms of assembly, part of the 50S ribosomal subunit. Forms a cluster with proteins L3 and L19. In the 70S ribosome, L14 and L19 interact and together make contacts with the 16S rRNA in bridges B5 and B8.

In terms of biological role, binds to 23S rRNA. Forms part of two intersubunit bridges in the 70S ribosome. This chain is Large ribosomal subunit protein uL14, found in Helicobacter pylori (strain P12).